The sequence spans 458 residues: L-hydantoinase (458 aa).

Zn(2+) contacts are provided by His-60, His-62, Lys-147, His-183, His-239, and Asp-312. N6-carboxylysine is present on Lys-147.

As to quaternary structure, homotetramer. Zn(2+) is required as a cofactor. Carboxylation allows a single lysine to coordinate two zinc ions.

Functionally, rather more predominant for the cleavage of aryl- than for alkyl-hydantoin derivatives. The stereoselectivity of this enzyme depends on the substrate used for bioconversion: strictly L-selective for the cleavage of D,L-5-indolylmethylhydantoin, but D-selective for the hydrolysis of D,L-methylthioethylhydantoin. This is L-hydantoinase (lhyD) from Paenarthrobacter aurescens (Arthrobacter aurescens).